The chain runs to 335 residues: Protein-glutamate methylesterase/protein-glutamine glutaminase 3 (335 aa).

Positions 2–119 (RIGIVNDMPL…GNPQTAAAPL (118 aa)) constitute a Response regulatory domain. A 4-aspartylphosphate modification is found at aspartate 53. Residues 144–335 (PKAGGARQRL…IAPRLAEVFD (192 aa)) enclose the CheB-type methylesterase domain. Residues serine 159, histidine 186, and aspartate 279 contribute to the active site.

This sequence belongs to the CheB family. In terms of processing, phosphorylated by CheA. Phosphorylation of the N-terminal regulatory domain activates the methylesterase activity.

The protein resides in the cytoplasm. The catalysed reaction is [protein]-L-glutamate 5-O-methyl ester + H2O = L-glutamyl-[protein] + methanol + H(+). It carries out the reaction L-glutaminyl-[protein] + H2O = L-glutamyl-[protein] + NH4(+). Involved in chemotaxis. Part of a chemotaxis signal transduction system that modulates chemotaxis in response to various stimuli. Catalyzes the demethylation of specific methylglutamate residues introduced into the chemoreceptors (methyl-accepting chemotaxis proteins or MCP) by CheR. Also mediates the irreversible deamidation of specific glutamine residues to glutamic acid. This Pseudomonas aeruginosa (strain ATCC 15692 / DSM 22644 / CIP 104116 / JCM 14847 / LMG 12228 / 1C / PRS 101 / PAO1) protein is Protein-glutamate methylesterase/protein-glutamine glutaminase 3.